The following is a 418-amino-acid chain: Intracellular coagulation inhibitor 1 (418 aa).

The N-terminal stretch at 1-24 is a signal peptide; it reads MKLGDWKFCLLLFQLMFLTNVCLS. N-linked (GlcNAc...) asparagine glycans are attached at residues Asn49 and Asn404.

This sequence belongs to the serpin family. Monomer. Forms a covalent heterodimer with clotting factor C. Interacts with big defensin. In terms of processing, N-glycosylated. Expressed in hemocytes (at protein level).

The protein resides in the secreted. Its function is as follows. Serine protease inhibitor that specifically inhibits clotting factor C. Does not inhibit clotting factor B or proclotting enzyme. This is Intracellular coagulation inhibitor 1 from Tachypleus tridentatus (Japanese horseshoe crab).